A 100-amino-acid polypeptide reads, in one-letter code: Aspartyl/glutamyl-tRNA(Asn/Gln) amidotransferase subunit C (100 aa).

Belongs to the GatC family. As to quaternary structure, heterotrimer of A, B and C subunits.

The catalysed reaction is L-glutamyl-tRNA(Gln) + L-glutamine + ATP + H2O = L-glutaminyl-tRNA(Gln) + L-glutamate + ADP + phosphate + H(+). The enzyme catalyses L-aspartyl-tRNA(Asn) + L-glutamine + ATP + H2O = L-asparaginyl-tRNA(Asn) + L-glutamate + ADP + phosphate + 2 H(+). Allows the formation of correctly charged Asn-tRNA(Asn) or Gln-tRNA(Gln) through the transamidation of misacylated Asp-tRNA(Asn) or Glu-tRNA(Gln) in organisms which lack either or both of asparaginyl-tRNA or glutaminyl-tRNA synthetases. The reaction takes place in the presence of glutamine and ATP through an activated phospho-Asp-tRNA(Asn) or phospho-Glu-tRNA(Gln). This chain is Aspartyl/glutamyl-tRNA(Asn/Gln) amidotransferase subunit C, found in Streptococcus suis (strain 98HAH33).